We begin with the raw amino-acid sequence, 284 residues long: 2,3,4,5-tetrahydropyridine-2,6-dicarboxylate N-succinyltransferase (284 aa).

Residues Arg111 and Asp148 each coordinate substrate.

It belongs to the transferase hexapeptide repeat family. In terms of assembly, homotrimer.

It is found in the cytoplasm. The enzyme catalyses (S)-2,3,4,5-tetrahydrodipicolinate + succinyl-CoA + H2O = (S)-2-succinylamino-6-oxoheptanedioate + CoA. It functions in the pathway amino-acid biosynthesis; L-lysine biosynthesis via DAP pathway; LL-2,6-diaminopimelate from (S)-tetrahydrodipicolinate (succinylase route): step 1/3. This chain is 2,3,4,5-tetrahydropyridine-2,6-dicarboxylate N-succinyltransferase, found in Brucella suis (strain ATCC 23445 / NCTC 10510).